A 147-amino-acid chain; its full sequence is Small ribosomal subunit protein uS12 (147 aa).

Belongs to the universal ribosomal protein uS12 family. In terms of assembly, part of the 30S ribosomal subunit.

Functionally, with S4 and S5 plays an important role in translational accuracy. Located at the interface of the 30S and 50S subunits. This Hyperthermus butylicus (strain DSM 5456 / JCM 9403 / PLM1-5) protein is Small ribosomal subunit protein uS12.